We begin with the raw amino-acid sequence, 506 residues long: Galactose/methyl galactoside import ATP-binding protein MglA (506 aa).

ABC transporter domains lie at 14 to 249 (LEMS…VGRS) and 264 to 506 (VILE…SLHL). 46-53 (GENGAGKS) is a binding site for ATP.

The protein belongs to the ABC transporter superfamily. Galactose/methyl galactoside importer (TC 3.A.1.2.3) family. The complex is composed of one ATP-binding protein (MglA), two transmembrane proteins (MglC) and a solute-binding protein (MglB).

Its subcellular location is the cell inner membrane. It carries out the reaction D-galactose(out) + ATP + H2O = D-galactose(in) + ADP + phosphate + H(+). The catalysed reaction is methyl beta-D-galactoside(out) + ATP + H2O = methyl beta-D-galactoside(in) + ADP + phosphate + H(+). Functionally, part of the ABC transporter complex MglABC involved in galactose/methyl galactoside import. Responsible for energy coupling to the transport system. This is Galactose/methyl galactoside import ATP-binding protein MglA from Yersinia pestis bv. Antiqua (strain Antiqua).